The following is a 220-amino-acid chain: Metalloproteinase inhibitor 2 (220 aa).

Positions 1-26 (MPGAALPSLLAWLAVLLLGRARPADA) are cleaved as a signal peptide. C27 provides a ligand contact to Zn(2+). Involved in metalloproteinase-binding stretches follow at residues 27–30 (CSCS) and 95–96 (TE). Disulfide bonds link C27/C98, C29/C127, C39/C152, C154/C201, C159/C164, and C172/C193. Residues 27–152 (CSCSPIHPQQ…SLNQRYQMGC (126 aa)) enclose the NTR domain.

Belongs to the protease inhibitor I35 (TIMP) family. In terms of processing, the activity of TIMP2 is dependent on the presence of disulfide bonds.

The protein resides in the secreted. Complexes with metalloproteinases (such as collagenases) and irreversibly inactivates them by binding to their catalytic zinc cofactor. This chain is Metalloproteinase inhibitor 2 (TIMP2), found in Gallus gallus (Chicken).